Here is a 102-residue protein sequence, read N- to C-terminus: Putative toxin YafQ (102 aa).

Belongs to the RelE toxin family. YafQ subfamily.

Its function is as follows. Toxic component of a type II toxin-antitoxin (TA) system. Its cognate antitoxin is RelB. The chain is Putative toxin YafQ from Haemophilus influenzae (strain ATCC 51907 / DSM 11121 / KW20 / Rd).